The chain runs to 56 residues: Conotoxin Bu12 (56 aa).

An N-terminal signal peptide occupies residues 1–2; sequence TA. Residues 3 to 25 constitute a propeptide that is removed on maturation; that stretch reads EDSRGTQLHRALRKATKLPVSTR. Disulfide bonds link C26/C40, C33/C44, and C39/C49.

This sequence belongs to the conotoxin O1 superfamily. In terms of tissue distribution, expressed by the venom duct.

The protein localises to the secreted. This is Conotoxin Bu12 from Conus bullatus (Bubble cone).